Consider the following 206-residue polypeptide: Photosynthetic reaction center cytochrome c-551 (206 aa).

The next 3 helical transmembrane spans lie at 10–30, 49–69, and 76–96; these read IALA…VSFL, FMGW…LGKM, and KWFL…FFSL. The heme site is built by C152, C155, H156, and M182.

In terms of assembly, component of the photosynthetic reaction center. The reaction center interacts with the Fenna-Matthews-Olson (FMO, fmoA) complex. Post-translationally, binds 1 heme group per subunit.

It localises to the cell inner membrane. Functionally, monoheme cytochrome which is the immediate electron donor to P840 of the photosynthetic reaction center complex. In Chlorobaculum parvum (strain DSM 263 / NCIMB 8327) (Chlorobium vibrioforme subsp. thiosulfatophilum), this protein is Photosynthetic reaction center cytochrome c-551 (pscC).